The sequence spans 246 residues: Small ribosomal subunit protein uS2 (246 aa).

Belongs to the universal ribosomal protein uS2 family.

The sequence is that of Small ribosomal subunit protein uS2 from Burkholderia cenocepacia (strain ATCC BAA-245 / DSM 16553 / LMG 16656 / NCTC 13227 / J2315 / CF5610) (Burkholderia cepacia (strain J2315)).